The chain runs to 49 residues: Delta-actitoxin-Axm1a (49 aa).

Disulfide bonds link C4-C46, C6-C36, and C29-C47.

It belongs to the sea anemone sodium channel inhibitory toxin family. Type I subfamily.

The protein localises to the secreted. The protein resides in the nematocyst. Its function is as follows. Binds specifically to voltage-gated sodium channels (Nav) (site 3), thereby delaying their inactivation. This toxin retains the greatest capacity to discriminate between the cardiac (Nav1.5/SCN5A) and neuronal sodium channels (2.5 nM versus 120 nM, when electrophysiologically tested and 14 nM versus 400 nM, when tested by ion flux), whereas its paralog Anthopleurin-B has the highest affinity of all anemone toxins for the mammalian sodium channel. Its ability to differentiate between cardiac and skeletal channels appears to be associated with domain 4 of the channel. This toxin does not slow or inhibit closed-state inactivation of cardiac sodium channels, but selectively modifies inactivation from the open-state. It does not display phospholipid-binding activities, suggesting that the domain IV S3-S4 linker is located at the extracellular surface and not buried in the phospholipid bilayer. The protein is Delta-actitoxin-Axm1a of Anthopleura xanthogrammica (Giant green sea anemone).